We begin with the raw amino-acid sequence, 385 residues long: MSWQQRVDDALTARRATDTLRRRYVVSQGAGRWLVANGRQYLNFSSNDYLGLSQHPQIIRAWQQAATRFGVGSGGSGHISGYSVAHQALEVELAQWLEYPRALLFISGFAANQAVITALMKKNDRIVADRLSHASLLEAANLSPAQLRRFIHNDTQHLSRLLQSPCVGQQLVVTEGVYSMDGDSAPLAEIQHIARRHHAWLLVDDAHGIGVTGDEGRGTCWQRGVKPELLVVTFGKGFGVSGAAVLCSESVADYLLQFARHLVYSTSMPPAQAQALSASLAVIRSDEGRERREKLAALVQRFRAGVNASRFTLLNAHSAIQPLIVGDNSRALRLAEALRQQGCWATAIRPPTVPVGTARLRLTLTQAHEACDIDRLLEVLHGAGE.

Arg-21 provides a ligand contact to substrate. 108–109 (GF) contributes to the pyridoxal 5'-phosphate binding site. His-133 is a binding site for substrate. Pyridoxal 5'-phosphate is bound by residues Ser-179, His-207, and Thr-233. Lys-236 is subject to N6-(pyridoxal phosphate)lysine. Thr-352 serves as a coordination point for substrate.

It belongs to the class-II pyridoxal-phosphate-dependent aminotransferase family. BioF subfamily. In terms of assembly, homodimer. Requires pyridoxal 5'-phosphate as cofactor.

The enzyme catalyses 6-carboxyhexanoyl-[ACP] + L-alanine + H(+) = (8S)-8-amino-7-oxononanoate + holo-[ACP] + CO2. The protein operates within cofactor biosynthesis; biotin biosynthesis. Catalyzes the decarboxylative condensation of pimeloyl-[acyl-carrier protein] and L-alanine to produce 8-amino-7-oxononanoate (AON), [acyl-carrier protein], and carbon dioxide. This chain is 8-amino-7-oxononanoate synthase, found in Salmonella newport (strain SL254).